Consider the following 530-residue polypeptide: MSEESGSFGGWFSSWFNTSKDQESSSNLIQQQQPGTNYARNQQTLSSLRSQKQQAESSKEDTRNSPGKLVRTDTESYLDAPKTQQANNNRKVTRRLPLTNNNLVIDCPIPDRLLGALNCTERDEFSQLRYTAATCEPDDFELEGYTLRPKIYNRETELFIEDEILFTRTMHGVMKNIAHLCSLKKNSVWGPDGWKKVVVCIVADGRKVVNKRVLNVLASMGIYQAGIAKNIVDNKPVKAHIYEYTTQISIDSDMNIKGSDKGIVPVQTIFCLKEKNAKKINSHRWFFNAFGPILQPNVCILLDVGTRPGNSSIYQLWKVFHRNPLIGGACGEIRAMLGTACCQLINPLVAAQNFEYKMSNILDKPLESVFGYISVLPGAFSAYRYAALKNDVSGQGPLEKYFLGEDLHKDQHTGKKAGLFEANMYLAEDRILCFELVAKKDERWLLQYVDSAFGETDVPSQLPEFISQRRRWLNGSFFAGVYGLIHFSKIWNSGHGFSRTFLLLIEGIYNVISLIFSWFSVVIVLSFLCT.

N-linked (GlcNAc...) asparagine glycosylation occurs at Asn-17. Residues 22 to 94 form a disordered region; that stretch reads QESSSNLIQQ…QANNNRKVTR (73 aa). Over residues 24–56 the composition is skewed to polar residues; that stretch reads SSSNLIQQQQPGTNYARNQQTLSSLRSQKQQAE. N-linked (GlcNAc...) asparagine glycans are attached at residues Asn-118, Asn-310, and Asn-474. 2 helical membrane-spanning segments follow: residues 477–497 and 508–528; these read FFAG…GHGF and IYNV…LSFL.

This sequence belongs to the chitin synthase family. Class II subfamily.

It is found in the cell membrane. The catalysed reaction is [(1-&gt;4)-N-acetyl-beta-D-glucosaminyl](n) + UDP-N-acetyl-alpha-D-glucosamine = [(1-&gt;4)-N-acetyl-beta-D-glucosaminyl](n+1) + UDP + H(+). Its function is as follows. Polymerizes chitin, a structural polymer of the cell wall and septum, by transferring the sugar moiety of UDP-GlcNAc to the non-reducing end of the growing chitin polymer. The chain is Chitin synthase 1 from Rhizopus delemar (strain RA 99-880 / ATCC MYA-4621 / FGSC 9543 / NRRL 43880) (Mucormycosis agent).